We begin with the raw amino-acid sequence, 243 residues long: Thaumatin-like protein 1 (243 aa).

Residues 1–22 (MMKTLALYGLTLALFFLSGAHS) form the signal peptide. 8 disulfides stabilise this stretch: cysteine 31/cysteine 242, cysteine 79/cysteine 88, cysteine 93/cysteine 100, cysteine 148/cysteine 231, cysteine 153/cysteine 214, cysteine 161/cysteine 177, cysteine 181/cysteine 190, and cysteine 191/cysteine 201.

Belongs to the thaumatin family.

The protein resides in the secreted. The protein localises to the extracellular space. It localises to the apoplast. In terms of biological role, possesses antifungal activity. The polypeptide is Thaumatin-like protein 1 (TL1) (Castanea sativa (Sweet chestnut)).